Consider the following 4882-residue polypeptide: MVTGCGAAPPGTVTERLPSVIVLSAGRKMAAAAAEASGPSCSSAAAAAGAGAAGVSEWLVLRDGCMRCDADGLHSLSYHPALNAILAVTSRGTIKVIDGTSGATLQASALSAKPGGQVKCQYISAVDKVIFVDDYAVGCRKDLNGILLLDTALQTPVSKQDDVVQLELPVTEAQQLLSACIEKIDVSSTEGYDLFITQLKDGLKNTSHETAANHKVAKWATVTFHLPHHVLKSIASAIVNELKKINQNVAALPVASSVMDRLSYLLPSARPELGVGPGRSVDRALMYSEANRRETFTSWPHVGYRWAQPDPMAQAGFYHQPASSGDDRAMCFTCSVCLVCWEPTDEPWSEHERHSPNCPFVKGEHTQNVPLSVTLATSPAQLPSADGADRIACFGSGSCPQFLAAATKRGKICIWDVSKLMKVHLKFEINAYDPAIVQQLILSGDPSSGVDSRRPTLAWLEDSSSCSDIPKLEGDSDDLLEDSDSEEHSRSDSVTGHTSQKEAMEVSLDITALSILQQPEKLQWEIVANVLEDTVKDLEELGANPSLTNSKSEKTKEKHQEQHNIPFPCLLAGGLLTYKSPATSPISSNSHRSLDGLSRTQGESISEQGSTDNESCTNSELNSPLVRRTLPVLLLYSIKESDEKAGKIFSQMNNIMSKSLHDDGFTVPQIIEMELDNQEQLLLQDPPVTYIQQFADAAASLTSPDSEKWNSVFPKPGALVQCLRLPKFAEEETLCIDSITPCADGIHLLVGLRTCSVESLSAINQVEALNNLNKLNSALCNRRKGDLESNLAVVNGANISVIQHESPADVPEHLLIRPEQRNVVSGGYLVLYKMNYTTRIVTLEEEPVKIQHIKDPQDTITSLILLPPDILDNREDDCEEPAEEMQLASKNGIEREKKSDISTLGHLVVTTQGGYVKVLDLSNFEILAKVEPPKKEGTEEQDTFVSVIYCSGTDRLCACTKGGELHFLQIGGTCDDIDEADILVDGSLSKGIEPALEGSRPLSNPSSPGISGVELLVDQPFTLEILTSLVELTRFETLTPRFSATVPPCWVEVQQEQQQRRHPQHLHQQHHGDAAQHTRTWKLQTDSNSWDEHVFELVLPKACMVGHVDFKFVLNSNITSVPQIQVTLLKNKAPGLGKANALNIEVEHNGNPSLVDLNEEMHHMDVEESQCLRLCPFLEDHKEDILCGPVWLASGLDLSGHAGMLTLTSPKLVKGMAGGKYRSFLIHVKAVSDRGAADEMCSSGLRPVVRLPSLKQQGHKGYSLASLLAKVAAGKEKSSNVKNENAGGTRKSENLRGCDLLQEVSVTIRRFKKTSICKERVQRCAMLQFSEFHEKLLNTLCRRSDDGQVTEHAQSLVLDALCWLAGVHSNGSGSSKEGNECLLSKTRKCLSDIVRVCFFEAGRSIAHKCARFLALCISNGKCEPCQPGFGSVLLKALLDNMCFLPAAATGGSVYWYFVLLNYVKDEDLAGCSTACAALLTAVSRQLQDRLTPLEALLQTRYGLYSSPFDPVLFDLEMSGSSWKTVYSSSTAVQSDEIDLSDVLSGNGRVSSCTAAEGSFTSLTGLLEVEPLHFTCVSTSDGTRIERDDASTFTVSSFGVPPAVGGLSSGTVGEASTALSSAAQVALQSLSHAMASAEQQLQVLQEKQQQLLKLQQQKAKLEAKLHQTTAAAAAAASAAAAAAAGPVHNAVPSNPVAAPGFFIHPSDVIPPTPKTTPLFMTPPLTPPNEAVSVVINAELAQLFPGSVIDPPAVNLAAQNKNSSKSRMNPLGSGLALAISHASHFLQPPPHQSIIIERMHSGARRFVTLDFGRPILLTDVLIPTCGDLASLSIDIWTLGEEVDGRRLVVATDISTHSLILHDLIPPPVCRFMKITVIGRYGSTNARAKIPLGFYYGHSYILPWESELKLMHDPLRGEGESASQPEIDQHLAMMVALQEDIQCRYNLACHRLEALLQSIDLPPLNSANNAQYFLRKPDKAVEEDSRVFSAYQDCIQLQLQLNLAHNAVQRLKVAIGASRKLLNETSGPEDLIQTSSTEQLRTIVRYLLDTLLSLLHSSNGHSVPAVLQSTFHAQACEELFKHLCISGTPKIRLHTGLLLVQLCGGERWWGQFLSNVLQELYNSEQLLIFPQDRVFMLLSCIGQRSLSNSGVLESLLNLLDNLLSPLQPELSMHRRTEGVLDIPMISWVVMLVSRLLDYVATVEDEAAAAKKPLNGKDRERFLTGNQWSFINNNLHTQNLNRSSKGGSSLDRLYSRKIRKQLVHHKQQLNLLKAKQKALVEQMEKEKIQSNKGSSYKLLVEQAKLKQATSKHFKDLIRLRRTAEWSRSNLDTEVTTTKESPEIEPLPFTLAHDRCISVVQKLVLFLLSMDFTCHADLLLFVCKVLARIANATRPTIHLCEIVNEPQLERLLLLLVGTDFNRGDISWGGAWAQYSLTCMLQDILAGELLAPVAAEAMEECTVSEDVGATAGDSDDSLQQSPAQLLETIDEPLTHEIAGTPPLSSLEKDKEIDLELLQDLMEVDIDPLDIDLEKDPLAAKVFKPISSTWYDYWGADYGTYNYNPYIGGLGMPVAKPPSNTEKNGSQTVSVSVSQALDARLEVGLEQQAELMLKMMSTLEADSILQALTNTSPTFSQSPTGTDDSLLGNLQPANQNSQLMIQLSSVPMLNVCFNKLFSMLQVHHVQLESLLQLWLTLSLNSSSSGNKENGADIFLYNANRIPVISLNQASIASFLTVLAWYPNTLLRTWCLVLHSLTLMTNMQLNSGSSSSIGIQETTAHLLVSDPNLIHVLVKFLSGTSPHGTNQHSPQVGPTATQAMQEFLTRLQVHLSSTCPQIFSELLLKLIHILSTERGAFQTGQGPLDAQVKLLEFTLEQNFEVVSVSTISAVIESVTFLVHHYITCSDKVMSRSGSDSSAGARACFGGLFANLIRPGDAKAVCGEMTRDQLMFDLLKLVNILVQLPLSSNREYSARVSVTTNTTDSVSDEEKVSGGKDVNGSSASTPGSPACVADLVLANQQIMSQILSALGLCNSSAMAMIIGASGLHLTKHENFHGGLDAISVGDGLFTILTTLSKKASTVHMMLQPILTYMACGYMGRQGSLATCQLSEPLLWFILRVLDTSDALKAFHDMGGVQLICNNMVTSTRAIVNTARSMVSTIMKFLDSGPNKAVDSTLKTRILASEPDNAEGIHNFAPLGTITSSSPTAQPAEVLLQATPPHRRARSAAWSYIFLPEEAWCDLTIHLPSAVLLKEIHIQPHLASLATCPSSVSVEVSADGVNMLPLSTPVVTSGLTYIKIQLVKAEVASAVCLRLHRPRDASTLGLSQIKLLGLTAFGTTSSATVNNPFLPSEDQVSKTSIGWLRLLHHCLTHISDLEGMMASAAAPTANLLQTCAALLMSPYCGMHSPNIEVVLVKIGLQSTRIGLKLIDILLRNCAASGSDPTDLNSPLLFGRLNGLSSDSTIDILYQLGTTQDPGTKDRIQALLKWVSDSAKMAALKRSGRMNYMCPSSSAVEYGLLMPSPSHLHCVAAILWHSYELLVEYDLPALLDRELFELLFNWSMSLPCNVVLKKAVDSLLCSMCHIHPNYFSLLMGWMGIIPPPVQCHHRLSMTDDSKKQDLSSSLTDDSKNAQAPLSLTESHLATLASSSQSPEAIKQLLDSGLPSLLVRSLASFCFSHISYSESIAQSVDNSQDKLRRHHVPQHCNKMPITADLVAPILRFLTEVGNSHIMKDWLGGSEVNPLWTALLFLLCHSGSTAGGHNLGAQQSSTRSASHSSATTTVLTTQQRTAIENATVAFFLQCISCHPNNQKLMAQVLCELFQTAPQRGSLPTSGNISGFVRRLFLQLMLEDEKVTMFLQSPCPLYKGRINATSHVIQHPMFGAGHKFRTLHLPVSTTLSDVLDRVSDTPSITAKLISEQKDDKEKKNHEEKEKVKAENGFQDNYSVVVASGLKSQSKRAMASTPPRPPSRRGRTIPDKIGSASSSADAASKIITVPVFHLFHRLLAGQPLPAEMTLAQLLTLLYDRKLPQGYRSIDLTVKLGSKVITDPSLSKTDSFKRLHPEKDHGDLVGSCPEDEALTPSDECMDGVLDESLLETCPIQSPLQVFAGMGGLALIAERLPMLYPEVIQQVSAPVIASTTQEKPKDSDQFEWVTIEQSGELVYEAPETIAAEPPPVKSAVQATSPIPAHSLAAFGLFLRLPGYAEVLLKERKHAQCLLRLVLGVTDDGEGSHILQSPSANVLPTLPFHVLRSLFSATPLTTDDGVLLRRMALEIGALHLILVCLSALSHHAPRVPNSSLSQTEPQVSNSHNPTSAEEQQLYWAKGTGFGTGSTASGWDVEQALTKQRLEEEHVTCLLQVLASYINPMSGAVNGEAQASPESRAQNSSALPSVLLELLSQSCLIPAMSSYLRNDSVLDMARHVPLYRALLELLRAIASCTSMVPLLLPLSTENGEEEEDEQSECQTSVGTLLAKMKTCVDTYTNRLRSKRENVKAGVKPDAPDQEPEGLALLVPDIQRTAEIVHAATANLRQANQEKKLGEYSKKVVMKPKPLSVLKSLEEKYVAVMKKLQFDTFEMVSEDDDGKLGFKVNYHYMSQVKNANDANSAARARRLAQEAVTLSTSLPLSSSSSVFVRCDEERLDIMKVLITGPADTPYANGCFEFDVYFPQDYPSSPPLVNLETTGGHSVRFNPNLYNDGKVCLSILNTWHGRPEEKWNPQTSSFLQVLVSVQSLILVAEPYFNEPGYERSRGTPSGTQSSREYDGNIRQATVKWAMLEQIRNPSPCFKEVIHKHFYLKRIELMAQCEEWIADIQQYSSDKRVGRTMSHHAAALKRHTAQLREELLKLPCPEGLDPDIEDASPVCRATAGAEDTLTHDHVNPSSSKDLPSDFQL.

WD repeat units lie at residues 71–109 and 110–139; these read DGLH…QASA and LSAK…AVGC. One copy of the BIR repeat lies at 292–362; that stretch reads RRETFTSWPH…RHSPNCPFVK (71 aa). Zn(2+) contacts are provided by C331, C334, H351, and C358. Residues 382 to 429 form a WD 3 repeat; it reads LPSADGADRIACFGSGSCPQFLAAATKRGKICIWDVSKLMKVHLKFEI. Disordered stretches follow at residues 468–502, 542–561, and 582–622; these read DIPK…SQKE, GANP…KHQE, and ATSP…SELN. Residues 475–485 are compositionally biased toward acidic residues; the sequence is DSDDLLEDSDS. Phosphoserine is present on residues S476, S483, and S485. 4 WD repeats span residues 504–723, 733–854, 855–931, and 932–970; these read MEVS…VQCL, TLCI…QHIK, DPQD…AKVE, and PPKK…FLQI. Residues 551–561 show a composition bias toward basic and acidic residues; sequence KSEKTKEKHQE. The span at 582 to 591 shows a compositional bias: polar residues; sequence ATSPISSNSH. S584 and S593 each carry phosphoserine. The segment covering 598–622 has biased composition (polar residues); it reads SRTQGESISEQGSTDNESCTNSELN. Residues 1057–1077 are disordered; sequence QQQRRHPQHLHQQHHGDAAQH. The span at 1060 to 1069 shows a compositional bias: basic residues; sequence RRHPQHLHQQ. T1724 is subject to Phosphothreonine. 2 positions are modified to phosphoserine: S2245 and S2978. Positions 2969 to 2998 are disordered; sequence VTTNTTDSVSDEEKVSGGKDVNGSSASTPG. An HRRAR loop; important for DIABLO/SMAC and HTRA2 binding region spans residues 3212–3216; it reads HRRAR. Residues 3842–4092 form the Ubiquitin-like domain; the sequence is DEKVTMFLQS…ESLLETCPIQ (251 aa). Disordered regions lie at residues 3908–3927 and 3943–3973; these read SEQK…KVKA and LKSQ…IGSA. Phosphothreonine is present on T3954. S4047 is subject to Phosphoserine. The interval 4285–4304 is disordered; that stretch reads VPNSSLSQTEPQVSNSHNPT. The span at 4286 to 4304 shows a compositional bias: polar residues; the sequence is PNSSLSQTEPQVSNSHNPT. The UBC core domain occupies 4598–4765; that stretch reads ARARRLAQEA…IRQATVKWAM (168 aa). C4691 acts as the Glycyl thioester intermediate in catalysis. The segment at 4857-4882 is disordered; the sequence is AGAEDTLTHDHVNPSSSKDLPSDFQL. The segment covering 4869–4882 has biased composition (polar residues); it reads NPSSSKDLPSDFQL.

It belongs to the BIRC6 family. Homodimer; antiparallel. Interacts with DIABLO/SMAC, likely with higher affinity to SMAC dimer than SMAC monomer; this interaction blocks the substrate-binding site and inhibits the caspase inhibition activity of BIRC6. Interacts with RNF41, KIF23/MKLP1, USP8/UBPY, BIRC5/survivin, MAP2K1/MEK1, RAB8A/RAB8, RAB11A/RAB11, PLK1, EXOC3/SEC6 and EXOC4/SEC8. In terms of processing, ubiquitinated. Ubiquitination is mediated by RNF41 E3 ligase and leads to proteasomal degradation, impairing inhibition of apoptosis. Deubiquitinated by USP8/UBPY. Autoubiquitinated; mediated by E1 ubiquitin activating enzyme UBA6. Post-translationally, proteolytically cleaved. Acts as substrate for CASP3, CASP6, CASP7, CASP9 and HTRA2. As to expression, widely expressed. Highly expressed in the brain and kidney.

Its subcellular location is the golgi apparatus. It is found in the trans-Golgi network membrane. The protein localises to the endosome. It localises to the cytoplasm. The protein resides in the cytoskeleton. Its subcellular location is the spindle pole. It is found in the microtubule organizing center. The protein localises to the centrosome. It localises to the midbody. The protein resides in the midbody ring. It catalyses the reaction S-ubiquitinyl-[E1 ubiquitin-activating enzyme]-L-cysteine + [acceptor protein]-L-lysine = [E1 ubiquitin-activating enzyme]-L-cysteine + N(6)-monoubiquitinyl-[acceptor protein]-L-lysine.. With respect to regulation, inhibited by DIABLO/SMAC, which competes for the substrate-binding sites on BIRC6. BIRC6 inhibits caspases and protease by ubiquitination but BIRC6 itself is subjected to protease cleavage by CASP3, CASP6, CASP7, CASP9 and HTRA2 by protease cleavage. Its function is as follows. Anti-apoptotic protein known as inhibitor of apoptosis (IAP) which can regulate cell death by controlling caspases and by acting as an E3 ubiquitin-protein ligase. Unlike most IAPs, does not contain a RING domain and it is not a RING-type E3 ligase. Instead acts as a dual E2/E3 enzyme that combines ubiquitin conjugating (E2) and ubiquitin ligase (E3) activities in a single polypeptide. Ubiquitination is mediated by a non-canonical E1 ubiquitin activating enzyme UBA6. Ubiquitinates CASP3, CASP7 and CASP9 and inhibits their caspase activity; also ubiquitinates their procaspases but to a weaker extent. Ubiquitinates pro-apoptotic factors DIABLO/SMAC and HTRA2. DIABLO/SMAC antagonizes the caspase inhibition activity of BIRC6 by competing for the same binding sites as the caspases. Ubiquitinates the autophagy protein MAP1LC3B; this activity is also inhibited by DIABLO/SMAC. Important regulator for the final stages of cytokinesis. Crucial for normal vesicle targeting to the site of abscission, but also for the integrity of the midbody and the midbody ring, and its striking ubiquitin modification. Required for normal placenta development. The chain is Dual E2 ubiquitin-conjugating enzyme/E3 ubiquitin-protein ligase BIRC6 (Birc6) from Mus musculus (Mouse).